The following is a 284-amino-acid chain: 2-dehydro-3-deoxyphosphooctonate aldolase (284 aa).

This sequence belongs to the KdsA family.

It is found in the cytoplasm. It catalyses the reaction D-arabinose 5-phosphate + phosphoenolpyruvate + H2O = 3-deoxy-alpha-D-manno-2-octulosonate-8-phosphate + phosphate. It participates in carbohydrate biosynthesis; 3-deoxy-D-manno-octulosonate biosynthesis; 3-deoxy-D-manno-octulosonate from D-ribulose 5-phosphate: step 2/3. Its pathway is bacterial outer membrane biogenesis; lipopolysaccharide biosynthesis. This is 2-dehydro-3-deoxyphosphooctonate aldolase from Aliivibrio fischeri (strain ATCC 700601 / ES114) (Vibrio fischeri).